The following is a 289-amino-acid chain: Bidirectional sugar transporter SWEET11 (289 aa).

Residues 1 to 9 lie on the Extracellular side of the membrane; that stretch reads MSLFNTENT. A helical membrane pass occupies residues 10-30; sequence WAFVFGLLGNLISFAVFLSPV. Residues 12 to 98 enclose the MtN3/slv 1 domain; it reads FVFGLLGNLI…SMFLAYAPKP (87 aa). The Cytoplasmic segment spans residues 31–43; that stretch reads PTFYRIWKKKTTE. Residues 44 to 64 traverse the membrane as a helical segment; the sequence is GFQSIPYVVALFSATLWLYYA. The Extracellular segment spans residues 65–70; the sequence is TQKKDV. A helical membrane pass occupies residues 71–91; sequence FLLVTINAFGCFIETIYISMF. Residues 92–105 are Cytoplasmic-facing; it reads LAYAPKPARMLTVK. A helical transmembrane segment spans residues 106 to 126; the sequence is MLLLMNFGGFCAILLLCQFLV. At 127-133 the chain is on the extracellular side; the sequence is KGATRAK. Residues 134–154 traverse the membrane as a helical segment; that stretch reads IIGGICVGFSVCVFAAPLSII. Residues 134–218 enclose the MtN3/slv 2 domain; the sequence is IIGGICVGFS…ILYVVYKYCK (85 aa). Residues 155-167 are Cytoplasmic-facing; the sequence is RTVIKTRSVEYMP. The helical transmembrane segment at 168–188 threads the bilayer; it reads FSLSLTLTISAVIWLLYGLAL. Residues 189–192 lie on the Extracellular side of the membrane; it reads KDIY. A helical membrane pass occupies residues 193–213; sequence VAFPNVLGFALGALQMILYVV. Topologically, residues 214 to 289 are cytoplasmic; it reads YKYCKTSPHL…GKQSSSAAAT (76 aa). The interval 266–289 is disordered; the sequence is DRRAEIEDGQTPKHGKQSSSAAAT. T276 carries the post-translational modification Phosphothreonine.

It belongs to the SWEET sugar transporter family. As to quaternary structure, forms homooligomers and heterooligomers with SWEET1, SWEET3, SWEET5, SWEET6, SWEET7, SWEET8, SWEET9, SWEET12, SWEET13, SWEET15 and SWEET17. As to expression, expressed in leaves, especially in phloem. Expressed in developing seeds.

Its subcellular location is the cell membrane. Its function is as follows. Mediates both low-affinity uptake and efflux of sugar across the plasma membrane. Involved in phloem loading by mediating export from parenchyma cells feeding H(+)-coupled import into the sieve element/companion cell complex, thus contributing to the sucrose migration from sites of synthesis in the mesophyll to the phloem. Contributes to seed filling by triggering sucrose efflux involved in the transfer of sugars from seed coat to embryos. The protein is Bidirectional sugar transporter SWEET11 of Arabidopsis thaliana (Mouse-ear cress).